A 341-amino-acid polypeptide reads, in one-letter code: Anthranilate phosphoribosyltransferase (341 aa).

5-phospho-alpha-D-ribose 1-diphosphate contacts are provided by residues Gly-85, 88-89, Thr-93, 95-98, 113-121, and Ser-125; these read GD, NIST, and KHGNRSASG. Gly-85 provides a ligand contact to anthranilate. Ser-97 serves as a coordination point for Mg(2+). Anthranilate is bound at residue Asn-116. Arg-171 lines the anthranilate pocket. Positions 230 and 231 each coordinate Mg(2+).

It belongs to the anthranilate phosphoribosyltransferase family. Homodimer. Mg(2+) is required as a cofactor.

The catalysed reaction is N-(5-phospho-beta-D-ribosyl)anthranilate + diphosphate = 5-phospho-alpha-D-ribose 1-diphosphate + anthranilate. It participates in amino-acid biosynthesis; L-tryptophan biosynthesis; L-tryptophan from chorismate: step 2/5. Functionally, catalyzes the transfer of the phosphoribosyl group of 5-phosphorylribose-1-pyrophosphate (PRPP) to anthranilate to yield N-(5'-phosphoribosyl)-anthranilate (PRA). The polypeptide is Anthranilate phosphoribosyltransferase (Prochlorococcus marinus (strain SARG / CCMP1375 / SS120)).